Here is a 329-residue protein sequence, read N- to C-terminus: MILSIESSCDDSSIAITRIKDYKLLFHKKISQELAHSEYGGVVPELASRLHAEALPKILEEAKEFLPQIKAIAVTNEPGLSVTLLEGIMMAKALHLALNVPLIGVNHLIGHVYSLFIEKEAVLPKMVLLVSGGHTMILDVKGYKDIKVLATTLDDSFGESFDKVAKMMGLGYPGGPVIEKLAQKGDANRFDFPIPLKNAKELAFSYSGLKNAVRLALSEMENLSEQDMADIAASFQKAAIAHLLQKTKKACEIYKPSDFAIVGGASANMALRKAFEQECAKRAIPIAFAKLEYCSDNAAMIGRAAVEAFLMNDFTDMDALVAIPRSCFV.

Positions 107 and 111 each coordinate Fe cation. Residues 129–133, Asp-162, Gly-175, and Asn-268 contribute to the substrate site; that span reads LVSGG. A Fe cation-binding site is contributed by Asp-296.

It belongs to the KAE1 / TsaD family. It depends on Fe(2+) as a cofactor.

The protein resides in the cytoplasm. It catalyses the reaction L-threonylcarbamoyladenylate + adenosine(37) in tRNA = N(6)-L-threonylcarbamoyladenosine(37) in tRNA + AMP + H(+). In terms of biological role, required for the formation of a threonylcarbamoyl group on adenosine at position 37 (t(6)A37) in tRNAs that read codons beginning with adenine. Is involved in the transfer of the threonylcarbamoyl moiety of threonylcarbamoyl-AMP (TC-AMP) to the N6 group of A37, together with TsaE and TsaB. TsaD likely plays a direct catalytic role in this reaction. The protein is tRNA N6-adenosine threonylcarbamoyltransferase of Nitratiruptor sp. (strain SB155-2).